Here is a 513-residue protein sequence, read N- to C-terminus: HMG box-containing protein 1 (513 aa).

The tract at residues 151 to 181 (RPPPVSSAKSGPAFPHDHWKEETPVRHERAN) is disordered. The segment covering 165-181 (PHDHWKEETPVRHERAN) has biased composition (basic and acidic residues). The AXH domain occupies 202-343 (WCNSWPSTVW…PPGHPDAINF (142 aa)). A DNA-binding region (HMG box) is located at residues 433-501 (CKRPMNAFML…EQKRLNPDCW (69 aa)).

Binds TCF4. Binds RB1. Binds the second PAH repeat of SIN3A. In terms of processing, ubiquitinated by the CTLH E3 ubiquitin-protein ligase complex, leading to subsequent proteasomal degradation. In terms of tissue distribution, highly expressed in liver, adipose tissue, lung, brain, spleen, kidney, skeletal muscle and heart.

Its subcellular location is the nucleus. Its function is as follows. Transcriptional repressor that binds to the promoter region of target genes. Plays a role in the regulation of the cell cycle and of the Wnt pathway. Binds preferentially to the sequence 5'-TTCATTCATTCA-3'. Binding to the histone H1.0 promoter is enhanced by interaction with RB1. Disrupts the interaction between DNA and TCF4. The polypeptide is HMG box-containing protein 1 (Hbp1) (Rattus norvegicus (Rat)).